The chain runs to 312 residues: uncharacterized protein (312 aa).

Belongs to the asfivirus CP312R family.

The protein resides in the virion. This is an uncharacterized protein from African swine fever virus (strain Badajoz 1971 Vero-adapted) (Ba71V).